A 629-amino-acid chain; its full sequence is uncharacterized protein (629 aa).

Disordered stretches follow at residues 101-126 (SWKK…TPPT), 172-209 (PQKD…EEED), 315-339 (STPK…NSQR), and 448-468 (GENT…SEEP). Acidic residues predominate over residues 200–209 (TEEEEEEEED). Serine 334 is modified (phosphoserine). Positions 448–463 (GENTANNGYGPQTLNE) are enriched in polar residues.

This is an uncharacterized protein from Schizosaccharomyces pombe (strain 972 / ATCC 24843) (Fission yeast).